The primary structure comprises 94 residues: Large ribosomal subunit protein uL23 (94 aa).

It belongs to the universal ribosomal protein uL23 family. Part of the 50S ribosomal subunit. Contacts protein L29, and trigger factor when it is bound to the ribosome.

In terms of biological role, one of the early assembly proteins it binds 23S rRNA. One of the proteins that surrounds the polypeptide exit tunnel on the outside of the ribosome. Forms the main docking site for trigger factor binding to the ribosome. The sequence is that of Large ribosomal subunit protein uL23 from Geobacter sulfurreducens (strain ATCC 51573 / DSM 12127 / PCA).